Here is a 626-residue protein sequence, read N- to C-terminus: Chaperone protein HtpG (626 aa).

The a; substrate-binding stretch occupies residues 1–339; sequence MSQNQETRGF…SNDLPLNVSR (339 aa). Residues 340–555 are b; the sequence is EILQDNKITA…NDQMTTQMAK (216 aa). Residues 556–626 form a c region; that stretch reads LFAAAGQPVP…FIKRINKLLG (71 aa).

This sequence belongs to the heat shock protein 90 family. Homodimer.

The protein resides in the cytoplasm. Molecular chaperone. Has ATPase activity. This chain is Chaperone protein HtpG, found in Haemophilus influenzae (strain PittEE).